The sequence spans 163 residues: Sperm surface protein Sp17 (163 aa).

2 disordered regions span residues 57-115 and 129-163; these read PAEW…EKEE and VARE…THEK. Composition is skewed to basic and acidic residues over residues 62-98 and 129-139; these read SKVE…KEEE and VAREEVKKMKT. In terms of domain architecture, IQ spans 114-143; the sequence is EEVAAVKIQAAFRGHVAREEVKKMKTDSLQ. Residues 153–163 show a composition bias toward polar residues; sequence DTGFTSRTHEK.

Homodimer. May interact with ROPN1. In terms of tissue distribution, testis- and sperm-specific.

The protein resides in the membrane. In terms of biological role, sperm surface zona pellucida binding protein. Helps to bind spermatozoa to the zona pellucida with high affinity. Might function in binding zona pellucida and carbohydrates. This is Sperm surface protein Sp17 (SPA17) from Papio hamadryas (Hamadryas baboon).